The sequence spans 247 residues: ATP synthase subunit a (247 aa).

Transmembrane regions (helical) follow at residues 24–44, 82–102, 112–132, 141–161, 194–214, and 219–239; these read IAFT…SLLM, FFPF…VGIV, IIVT…YGFY, LFVP…IEVI, MLGA…ALVV, and LELL…CIYI.

This sequence belongs to the ATPase A chain family. As to quaternary structure, F-type ATPases have 2 components, CF(1) - the catalytic core - and CF(0) - the membrane proton channel. CF(1) has five subunits: alpha(3), beta(3), gamma(1), delta(1), epsilon(1). CF(0) has three main subunits: a(1), b(2) and c(9-12). The alpha and beta chains form an alternating ring which encloses part of the gamma chain. CF(1) is attached to CF(0) by a central stalk formed by the gamma and epsilon chains, while a peripheral stalk is formed by the delta and b chains.

The protein localises to the cell inner membrane. Functionally, key component of the proton channel; it plays a direct role in the translocation of protons across the membrane. This is ATP synthase subunit a from Nitrobacter hamburgensis (strain DSM 10229 / NCIMB 13809 / X14).